Consider the following 343-residue polypeptide: Selenide, water dikinase (343 aa).

Sec-13 is an active-site residue. Position 13 (Sec-13) is a non-standard amino acid, selenocysteine. ATP-binding positions include Lys-16 and 44 to 46; that span reads TAD. Asp-47 is a Mg(2+) binding site. ATP is bound by residues Asp-64, Asp-87, and 135–137; that span reads GHT. Asp-87 contacts Mg(2+). Position 223 (Asp-223) interacts with Mg(2+).

Belongs to the selenophosphate synthase 1 family. Class I subfamily. Homodimer. It depends on Mg(2+) as a cofactor.

It catalyses the reaction hydrogenselenide + ATP + H2O = selenophosphate + AMP + phosphate + 2 H(+). Its function is as follows. Synthesizes selenophosphate from selenide and ATP. In Geobacter metallireducens (strain ATCC 53774 / DSM 7210 / GS-15), this protein is Selenide, water dikinase.